Here is a 672-residue protein sequence, read N- to C-terminus: MLDKTTIDGQEDIVTHPVPKRLLNSAECPTPHVNSLEQYKSMWKESVEQPEKFFGNLGRELLSWSKPFETVQYGSFEAGDVAWFLEGELNASYNCVDRHAFKNPDKIAIIHEGDEPDQVRRITYGELLREVCRMANVLKGLGVRKGDPVAIYMPMIPETIVAILACARIGAIHSVVFAGFSAEILRDRVVDCATRVVLTSDEGRRGGKNIATKCIVDEALRDYENHSVEHVLVFRRTGSPVPWVQGRDVWWHEEMAKARTFCSPEPMSAEDPLFLLYTSGSTGTPKGILHTTGGYLLGVAATVKYIFDYQENDIYACMADIGWVTGHSYIVYGPLTLGATTVLFESTPTYPNPSRFWQLIEKHKITQFYTAPTAIRALQRLGDQWLDNIDMSSLRVLGSVGEPINREAWDWYNEKVGKGRCAVVDTYWQTETGSIIVSPLPGATPTKPGSATLPFFGIDPVLLDPTTGKELTATGQTGVLAIRKPRPSMARSVYNNHSRFVETYLKPYPGYYFTGDGALRDDDGYIWIRGRVDDVINVSGHRLSTSEIESALVNHEAVAESAVVGAHDDLTGQCIHAFVSLKPHIQIADGLEKVLTLQVRKTIGPFAAPRRIYIVSDHPKTRSGKIMRRILRKIVNGEHDQLGDISTLADPSIVAVLINKVQRLNTEANIYI.

Residues Arg-205–Lys-208 and Thr-325 each bind CoA. Residues Gly-401–Pro-403, Asp-425–Thr-430, Asp-516, and Arg-531 each bind ATP. Ser-539 provides a ligand contact to CoA. Residue Arg-542 coordinates ATP. Arg-600 is a binding site for CoA.

Belongs to the ATP-dependent AMP-binding enzyme family.

The catalysed reaction is acetate + ATP + CoA = acetyl-CoA + AMP + diphosphate. This is Acetyl-coenzyme A synthetase (facA) from Phycomyces blakesleeanus (strain ATCC 8743b / DSM 1359 / FGSC 10004 / NBRC 33097 / NRRL 1555).